The chain runs to 444 residues: Phosphoglucosamine mutase (444 aa).

Catalysis depends on S102, which acts as the Phosphoserine intermediate. Residues S102, D241, D243, and D245 each coordinate Mg(2+). S102 bears the Phosphoserine mark.

Belongs to the phosphohexose mutase family. Mg(2+) is required as a cofactor. Post-translationally, activated by phosphorylation.

The enzyme catalyses alpha-D-glucosamine 1-phosphate = D-glucosamine 6-phosphate. Its function is as follows. Catalyzes the conversion of glucosamine-6-phosphate to glucosamine-1-phosphate. The protein is Phosphoglucosamine mutase of Actinobacillus pleuropneumoniae serotype 5b (strain L20).